A 224-amino-acid polypeptide reads, in one-letter code: Probable proteasome subunit beta type-4 (224 aa).

Belongs to the peptidase T1B family. In terms of assembly, the 26S proteasome consists of a 20S proteasome core and two 19S regulatory subunits. The 20S proteasome core is composed of 28 subunits that are arranged in four stacked rings, resulting in a barrel-shaped structure. The two end rings are each formed by seven alpha subunits, and the two central rings are each formed by seven beta subunits. The catalytic chamber with the active sites is on the inside of the barrel.

The protein localises to the cytoplasm. It localises to the nucleus. Non-catalytic component of the proteasome, a multicatalytic proteinase complex which is characterized by its ability to cleave peptides with Arg, Phe, Tyr, Leu, and Glu adjacent to the leaving group at neutral or slightly basic pH. The proteasome has an ATP-dependent proteolytic activity. This chain is Probable proteasome subunit beta type-4 (CPR1), found in Cryptococcus neoformans var. neoformans serotype D (strain B-3501A) (Filobasidiella neoformans).